A 777-amino-acid chain; its full sequence is C6 finger domain transcription factor adaR (777 aa).

The segment at 1 to 20 is disordered; sequence MEQRSSPARSLPPRKTTTTP. The segment at residues 24 to 50 is a DNA-binding region (zn(2)-C6 fungal-type); it reads CELCRKRKVKCDKLTPCTNCAASGTVC. 6 disordered regions span residues 61–85, 111–144, 182–213, 419–440, 468–496, and 655–699; these read GRHA…TDRI, NSHS…NPNT, SSLA…VLGL, PQHI…PNRE, RKVD…DPSW, and LPPS…PTGS. The segment covering 475 to 489 has biased composition (low complexity); that stretch reads PTPTSSTSGTSTSRS. Residues 668–677 show a composition bias toward pro residues; that stretch reads ATPPTFPGVP.

Its subcellular location is the nucleus. In terms of biological role, transcription factor that specifically regulates the expression of the ada gene cluster involved in the biosynthesis of the linear tetracyclic TAN-1612 neuropeptide Y receptor antagonist. The polypeptide is C6 finger domain transcription factor adaR (Aspergillus niger (strain ATCC MYA-4892 / CBS 513.88 / FGSC A1513)).